A 229-amino-acid polypeptide reads, in one-letter code: Leucyl/phenylalanyl-tRNA--protein transferase (229 aa).

The protein belongs to the L/F-transferase family.

The protein localises to the cytoplasm. The catalysed reaction is N-terminal L-lysyl-[protein] + L-leucyl-tRNA(Leu) = N-terminal L-leucyl-L-lysyl-[protein] + tRNA(Leu) + H(+). It carries out the reaction N-terminal L-arginyl-[protein] + L-leucyl-tRNA(Leu) = N-terminal L-leucyl-L-arginyl-[protein] + tRNA(Leu) + H(+). The enzyme catalyses L-phenylalanyl-tRNA(Phe) + an N-terminal L-alpha-aminoacyl-[protein] = an N-terminal L-phenylalanyl-L-alpha-aminoacyl-[protein] + tRNA(Phe). Functionally, functions in the N-end rule pathway of protein degradation where it conjugates Leu, Phe and, less efficiently, Met from aminoacyl-tRNAs to the N-termini of proteins containing an N-terminal arginine or lysine. The protein is Leucyl/phenylalanyl-tRNA--protein transferase of Desulforapulum autotrophicum (strain ATCC 43914 / DSM 3382 / VKM B-1955 / HRM2) (Desulfobacterium autotrophicum).